A 1396-amino-acid polypeptide reads, in one-letter code: DNA-directed RNA polymerase subunit beta (1396 aa).

It belongs to the RNA polymerase beta chain family. The RNAP catalytic core consists of 2 alpha, 1 beta, 1 beta' and 1 omega subunit. When a sigma factor is associated with the core the holoenzyme is formed, which can initiate transcription.

It carries out the reaction RNA(n) + a ribonucleoside 5'-triphosphate = RNA(n+1) + diphosphate. DNA-dependent RNA polymerase catalyzes the transcription of DNA into RNA using the four ribonucleoside triphosphates as substrates. This Erythrobacter litoralis (strain HTCC2594) protein is DNA-directed RNA polymerase subunit beta.